A 366-amino-acid polypeptide reads, in one-letter code: Aminomethyltransferase (366 aa).

Belongs to the GcvT family. As to quaternary structure, the glycine cleavage system is composed of four proteins: P, T, L and H.

It carries out the reaction N(6)-[(R)-S(8)-aminomethyldihydrolipoyl]-L-lysyl-[protein] + (6S)-5,6,7,8-tetrahydrofolate = N(6)-[(R)-dihydrolipoyl]-L-lysyl-[protein] + (6R)-5,10-methylene-5,6,7,8-tetrahydrofolate + NH4(+). In terms of biological role, the glycine cleavage system catalyzes the degradation of glycine. This chain is Aminomethyltransferase, found in Chlorobium chlorochromatii (strain CaD3).